Consider the following 119-residue polypeptide: Toxin ICK-11 (119 aa).

A signal peptide spans 1 to 19 (MMKLYSLVIIATLAAAAFA). Disulfide bonds link Cys-59–Cys-74, Cys-67–Cys-80, Cys-71–Cys-116, and Cys-73–Cys-87.

The protein belongs to the neurotoxin 25 family. ICK-8 subfamily. As to expression, expressed by the venom gland.

It localises to the secreted. Its function is as follows. Ion channel inhibitor. The protein is Toxin ICK-11 of Trittame loki (Brush-footed trapdoor spider).